The sequence spans 125 residues: Photosystem I reaction center subunit IV, chloroplastic (125 aa).

A chloroplast-targeting transit peptide spans 1–34 (MASIASSVAVRLGLTQVLPNKNFSSPRSTRLVVR). The span at 42–57 (APAAASPEGEAPKAAA) shows a compositional bias: low complexity. The disordered stretch occupies residues 42-68 (APAAASPEGEAPKAAAKPPPIGPKRGS).

It belongs to the PsaE family.

It is found in the plastid. The protein resides in the chloroplast thylakoid membrane. Stabilizes the interaction between PsaC and the PSI core, assists the docking of the ferredoxin to PSI and interacts with ferredoxin-NADP oxidoreductase. The sequence is that of Photosystem I reaction center subunit IV, chloroplastic (PSAE-1) from Spinacia oleracea (Spinach).